We begin with the raw amino-acid sequence, 1227 residues long: DNA-directed RNA polymerase subunit beta' (1227 aa).

The Zn(2+) site is built by Cys60, Cys62, Cys75, and Cys78. Residues Asp449, Asp451, and Asp453 each contribute to the Mg(2+) site. 4 residues coordinate Zn(2+): Cys847, Cys921, Cys928, and Cys931.

The protein belongs to the RNA polymerase beta' chain family. In terms of assembly, the RNAP catalytic core consists of 2 alpha, 1 beta, 1 beta' and 1 omega subunit. When a sigma factor is associated with the core the holoenzyme is formed, which can initiate transcription. Mg(2+) serves as cofactor. Requires Zn(2+) as cofactor.

It catalyses the reaction RNA(n) + a ribonucleoside 5'-triphosphate = RNA(n+1) + diphosphate. Its function is as follows. DNA-dependent RNA polymerase catalyzes the transcription of DNA into RNA using the four ribonucleoside triphosphates as substrates. In Lysinibacillus sphaericus (strain C3-41), this protein is DNA-directed RNA polymerase subunit beta'.